A 706-amino-acid chain; its full sequence is Zinc finger and BTB domain-containing protein 17 (706 aa).

The 12-residue stretch at leucine 1–valine 12 folds into the BTB domain. Residues threonine 32–arginine 194 are disordered. Over residues glutamate 67 to proline 78 the composition is skewed to basic and acidic residues. Over residues alanine 90 to alanine 106 the composition is skewed to low complexity. A compositionally biased stretch (acidic residues) spans glycine 134–glutamate 148. Residues serine 170 to glutamate 182 show a composition bias toward polar residues. C2H2-type zinc fingers lie at residues histidine 205–histidine 227, phenylalanine 233–histidine 255, tyrosine 261–histidine 283, tyrosine 289–histidine 311, tyrosine 317–histidine 339, histidine 345–histidine 367, leucine 373–histidine 395, tyrosine 401–histidine 423, lysine 427–histidine 450, tyrosine 457–histidine 479, histidine 485–histidine 507, phenylalanine 513–histidine 536, and tyrosine 618–histidine 640. The disordered stretch occupies residues proline 680 to glutamate 706. Residues alanine 687–alanine 698 show a composition bias toward low complexity.

This sequence belongs to the krueppel C2H2-type zinc-finger protein family.

It localises to the nucleus. Functionally, transcription factor that can function as an activator or repressor depending on its binding partners, and by targeting negative regulators of cell cycle progression. Plays a critical role in early lymphocyte development, where it is essential to prevent apoptosis in lymphoid precursors, allowing them to survive in response to IL7 and undergo proper lineage commitment. Has been shown to bind to the promoters of adenovirus major late protein and cyclin D1 and activate transcription. Required for early embryonic development during gastrulation. Represses RB1 transcription. In Gallus gallus (Chicken), this protein is Zinc finger and BTB domain-containing protein 17 (ZBTB17).